The sequence spans 235 residues: Glycerol-3-phosphate acyltransferase (235 aa).

6 helical membrane-spanning segments follow: residues 4–24, 56–76, 90–110, 126–146, 152–172, and 191–211; these read LIVILAVSYLIGSIPTSIIAG, AVTLLDIVKGAVAAISVVVFF, VALRLIAGLAAVFGHVFTVFA, FGIAPVSTLIVLAVFLLTIFV, VASIIAAIAFPLVILVRKYLF, and IHDSLDFHLLIFGMIVAFAII.

The protein belongs to the PlsY family. As to quaternary structure, probably interacts with PlsX.

The protein localises to the cell inner membrane. It carries out the reaction an acyl phosphate + sn-glycerol 3-phosphate = a 1-acyl-sn-glycero-3-phosphate + phosphate. It participates in lipid metabolism; phospholipid metabolism. In terms of biological role, catalyzes the transfer of an acyl group from acyl-phosphate (acyl-PO(4)) to glycerol-3-phosphate (G3P) to form lysophosphatidic acid (LPA). This enzyme utilizes acyl-phosphate as fatty acyl donor, but not acyl-CoA or acyl-ACP. This chain is Glycerol-3-phosphate acyltransferase, found in Prosthecochloris aestuarii (strain DSM 271 / SK 413).